A 575-amino-acid polypeptide reads, in one-letter code: Alpha-(1,6)-fucosyltransferase (575 aa).

Topologically, residues 1–9 (MRPWTGSWR) are cytoplasmic. A helical; Signal-anchor for type II membrane protein transmembrane segment spans residues 10 to 30 (WIMLILFAWGTLLFYIGGHLV). Residues 31–575 (RDNDHPDHSS…KYPTYPEAEK (545 aa)) lie on the Lumenal side of the membrane. 3 disulfide bridges follow: cysteine 204-cysteine 266, cysteine 212-cysteine 230, and cysteine 218-cysteine 222. In terms of domain architecture, GT23 spans 206 to 493 (KAKKLVCNIN…PDASANFHSL (288 aa)). Phosphoserine is present on serine 278. An SH3-binding motif is present at residues 299 to 305 (PRPPYLP). An important for donor substrate binding region spans residues 365 to 366 (RR). A disulfide bridge connects residues cysteine 465 and cysteine 472. The region spanning 502-563 (QNAHNQIAIY…PSYKVREKIE (62 aa)) is the SH3 domain.

This sequence belongs to the glycosyltransferase 23 family. Tyrosine phosphorylated by PKDCC/VLK.

Its subcellular location is the golgi apparatus. It is found in the golgi stack membrane. It catalyses the reaction N(4)-{beta-D-GlcNAc-(1-&gt;2)-alpha-D-Man-(1-&gt;3)-[beta-D-GlcNAc-(1-&gt;2)-alpha-D-Man-(1-&gt;6)]-beta-D-Man-(1-&gt;4)-beta-D-GlcNAc-(1-&gt;4)-beta-D-GlcNAc}-L-asparaginyl-[protein] + GDP-beta-L-fucose = an N(4)-{beta-D-GlcNAc-(1-&gt;2)-alpha-D-Man-(1-&gt;3)-[beta-D-GlcNAc-(1-&gt;2)-alpha-D-Man-(1-&gt;6)]-beta-D-Man-(1-&gt;4)-beta-D-GlcNAc-(1-&gt;4)-[alpha-L-Fuc-(1-&gt;6)]-beta-D-GlcNAc}-L-asparaginyl-[protein] + GDP + H(+). Its pathway is protein modification; protein glycosylation. In terms of biological role, catalyzes the addition of fucose in alpha 1-6 linkage to the first GlcNAc residue, next to the peptide chains in N-glycans. This chain is Alpha-(1,6)-fucosyltransferase (FUT8), found in Homo sapiens (Human).